The primary structure comprises 187 residues: Large ribosomal subunit protein uL22 (187 aa).

The segment at 161-187 (APTDDAPAKKKLSKKKLARQKEKMMRE) is disordered. Positions 169 to 178 (KKKLSKKKLA) are enriched in basic residues.

It belongs to the universal ribosomal protein uL22 family.

The sequence is that of Large ribosomal subunit protein uL22 (RpL17) from Bombyx mori (Silk moth).